The primary structure comprises 349 residues: 5,10-methylenetetrahydromethanopterin reductase (349 aa).

It belongs to the mer family. Homotetramer composed of two loosely associated dimers.

The protein localises to the cytoplasm. The enzyme catalyses 5-methyl-5,6,7,8-tetrahydromethanopterin + oxidized coenzyme F420-(gamma-L-Glu)(n) + H(+) = 5,10-methylenetetrahydromethanopterin + reduced coenzyme F420-(gamma-L-Glu)(n). It participates in one-carbon metabolism; methanogenesis from CO(2); methyl-coenzyme M from 5,10-methylene-5,6,7,8-tetrahydromethanopterin: step 1/2. With respect to regulation, requires the presence of relatively high concentrations of either sulfate or phosphate for maximal activity. Functionally, catalyzes the reversible reduction of methylene-H(4)MPT to methyl-H(4)MPT. The polypeptide is 5,10-methylenetetrahydromethanopterin reductase (Methanopyrus kandleri (strain AV19 / DSM 6324 / JCM 9639 / NBRC 100938)).